Here is a 411-residue protein sequence, read N- to C-terminus: cAMP-dependent protein kinase regulatory subunit (411 aa).

Residues 1–144 (MAESAFPSAQ…SWTPPYHEKT (144 aa)) are disordered. The tract at residues 23-159 (AAFQKISEED…RLKTAVSSNF (137 aa)) is dimerization and phosphorylation. The span at 46–58 (SANAAAASSSTGS) shows a compositional bias: low complexity. The span at 85–96 (EEDEEGADEFPP) shows a compositional bias: acidic residues. Over residues 119 to 136 (TSVSAESLNPTSAGSDSW) the composition is skewed to polar residues. A Phosphoserine modification is found at S120. Residues 160–289 (LFSH…FLEE), E238, R247, 292–411 (LLSS…PVPA), E359, and R368 each bind 3',5'-cyclic AMP.

Belongs to the cAMP-dependent kinase regulatory chain family. As to quaternary structure, tetramer, composed of 2 regulatory (R) and 2 catalytic (C) subunits. In the presence of cAMP it dissociates into 2 active monomeric C subunits and an R dimer.

The chain is cAMP-dependent protein kinase regulatory subunit (pkaR) from Aspergillus niger.